We begin with the raw amino-acid sequence, 264 residues long: Major prion protein (264 aa).

Residues 1-24 form the signal peptide; it reads MVKSHIGSWILVLFVAMWSDVGLC. The interval 25–41 is interaction with ADGRG6; the sequence is KKRPKPGGGWNTGGSRY. The tract at residues 25–241 is interaction with GRB2, ERI3 and SYN1; it reads KKRPKPGGGW…ESQAYYQRGA (217 aa). Positions 28–119 are disordered; the sequence is PKPGGGWNTG…WNKPSKPKTN (92 aa). 6 tandem repeats follow at residues 54 to 62, 63 to 70, 71 to 78, 79 to 86, 87 to 94, and 95 to 103. The interval 54-103 is 6 X 8 AA tandem repeats of P-H-G-G-G-W-G-Q; it reads PQGGGGWGQPHGGGWGQPHGGGWGQPHGGGWGQPHGGGWGQPHGGGGWGQ. Gly residues predominate over residues 55–107; the sequence is QGGGGWGQPHGGGWGQPHGGGWGQPHGGGWGQPHGGGWGQPHGGGGWGQGGTH. 12 residues coordinate Cu(2+): His72, Gly73, Gly74, His80, Gly81, Gly82, His88, Gly89, Gly90, His96, Gly98, and Gly99. A disulfide bridge connects residues Cys190 and Cys225. 2 N-linked (GlcNAc...) asparagine glycosylation sites follow: Asn192 and Asn208. The GPI-anchor amidated alanine moiety is linked to residue Ala241. A propeptide spans 242–264 (removed in mature form); the sequence is SVILFSSPPVILLISFLIFLIVG.

It belongs to the prion family. As to quaternary structure, monomer and homodimer. Has a tendency to aggregate into amyloid fibrils containing a cross-beta spine, formed by a steric zipper of superposed beta-strands. Soluble oligomers may represent an intermediate stage on the path to fibril formation. Copper binding may promote oligomerization. Interacts with GRB2, APP, ERI3/PRNPIP and SYN1. Mislocalized cytosolically exposed PrP interacts with MGRN1; this interaction alters MGRN1 subcellular location and causes lysosomal enlargement. Interacts with APP. Interacts with KIAA1191. Interacts with ADGRG6.

It is found in the cell membrane. The protein localises to the golgi apparatus. Its primary physiological function is unclear. May play a role in neuronal development and synaptic plasticity. May be required for neuronal myelin sheath maintenance. May promote myelin homeostasis through acting as an agonist for ADGRG6 receptor. May play a role in iron uptake and iron homeostasis. Soluble oligomers are toxic to cultured neuroblastoma cells and induce apoptosis (in vitro). Association with GPC1 (via its heparan sulfate chains) targets PRNP to lipid rafts. Also provides Cu(2+) or Zn(2+) for the ascorbate-mediated GPC1 deaminase degradation of its heparan sulfate side chains. The protein is Major prion protein (PRNP) of Bos indicus x Bos taurus (Hybrid cattle).